The chain runs to 75 residues: Small ribosomal subunit protein bS18 (75 aa).

It belongs to the bacterial ribosomal protein bS18 family. Part of the 30S ribosomal subunit. Forms a tight heterodimer with protein bS6.

Its function is as follows. Binds as a heterodimer with protein bS6 to the central domain of the 16S rRNA, where it helps stabilize the platform of the 30S subunit. In Cereibacter sphaeroides (strain KD131 / KCTC 12085) (Rhodobacter sphaeroides), this protein is Small ribosomal subunit protein bS18.